A 58-amino-acid chain; its full sequence is U-scoloptoxin(14)-Sa1a (58 aa).

Residues 1–18 form the signal peptide; sequence MNRILGMIFLFCLISCYA.

The protein belongs to the scoloptoxin-14 family. In terms of processing, contains 4 disulfide bonds. In terms of tissue distribution, expressed by the venom gland.

It localises to the secreted. The sequence is that of U-scoloptoxin(14)-Sa1a from Scolopendra alternans (Florida Keys giant centipede).